Here is a 358-residue protein sequence, read N- to C-terminus: Biotin synthase (358 aa).

The region spanning 55–278 (NKVRIHILDN…VNPDSEIRIA (224 aa)) is the Radical SAM core domain. [4Fe-4S] cluster is bound by residues C70, C74, and C77. The [2Fe-2S] cluster site is built by C114, C146, C206, and R276.

This sequence belongs to the radical SAM superfamily. Biotin synthase family. As to quaternary structure, homodimer. It depends on [4Fe-4S] cluster as a cofactor. [2Fe-2S] cluster is required as a cofactor.

The catalysed reaction is (4R,5S)-dethiobiotin + (sulfur carrier)-SH + 2 reduced [2Fe-2S]-[ferredoxin] + 2 S-adenosyl-L-methionine = (sulfur carrier)-H + biotin + 2 5'-deoxyadenosine + 2 L-methionine + 2 oxidized [2Fe-2S]-[ferredoxin]. Its pathway is cofactor biosynthesis; biotin biosynthesis; biotin from 7,8-diaminononanoate: step 2/2. Catalyzes the conversion of dethiobiotin (DTB) to biotin by the insertion of a sulfur atom into dethiobiotin via a radical-based mechanism. This chain is Biotin synthase, found in Leptospira borgpetersenii serovar Hardjo-bovis (strain JB197).